The chain runs to 75 residues: MGSMSIWHWIVVLAVVLLLFGRGKISDLMGDVAKGIKSFKKGMAEDDDAPAKPAEPPRAVPHQATPAPESEKKAV.

The helical transmembrane segment at 1–21 (MGSMSIWHWIVVLAVVLLLFG) threads the bilayer. The interval 43 to 75 (MAEDDDAPAKPAEPPRAVPHQATPAPESEKKAV) is disordered.

The protein belongs to the TatA/E family. In terms of assembly, the Tat system comprises two distinct complexes: a TatABC complex, containing multiple copies of TatA, TatB and TatC subunits, and a separate TatA complex, containing only TatA subunits. Substrates initially bind to the TatABC complex, which probably triggers association of the separate TatA complex to form the active translocon.

It is found in the cell inner membrane. Its function is as follows. Part of the twin-arginine translocation (Tat) system that transports large folded proteins containing a characteristic twin-arginine motif in their signal peptide across membranes. TatA could form the protein-conducting channel of the Tat system. In Azorhizobium caulinodans (strain ATCC 43989 / DSM 5975 / JCM 20966 / LMG 6465 / NBRC 14845 / NCIMB 13405 / ORS 571), this protein is Sec-independent protein translocase protein TatA.